Reading from the N-terminus, the 308-residue chain is E3 ubiquitin-protein ligase RING2 (308 aa).

An N-acetylserine modification is found at Ser2. Residues 2-179 (SQAVQTNGTQ…AEDNGDSSHC (178 aa)) are interaction with HIP2. Residue Ser41 is modified to Phosphoserine. The RING-type zinc-finger motif lies at 51 to 91 (CPICLDMLKNTMTTKECLHRFCADCIITALRSGNKECPTCR). The interval 93 to 98 (KLVSKR) is interaction with nucleosomes via an acidic patch on histone H2A and histone H2B. Lys112 is covalently cross-linked (Glycyl lysine isopeptide (Lys-Gly) (interchain with G-Cter in ubiquitin)). 2 positions are modified to phosphoserine: Ser143 and Ser168. The segment at 157 to 206 (QRGKKQQIENGSGAEDNGDSSHCSNASTHSNQEAGPSNKRTKTSDDSGLE) is disordered. A compositionally biased stretch (polar residues) spans 176–191 (SSHCSNASTHSNQEAG). A Glycyl lysine isopeptide (Lys-Gly) (interchain with G-Cter in SUMO2) cross-link involves residue Lys249.

As to quaternary structure, component of chromatin-associated Polycomb (PcG) complexes. Component of a number of PRC1-like complexes; these complexes contain either the polycomb group ring finger protein PCGF1, or PCGF2, or PCGF3, or BMI1, or PCGF5, or PCGF6. Distinct PRC1-like complexes are composed of a RING1 subunit (RING1B or RING1A), one of the six PCGF proteins (PCGF1, PCGF2, PCGF3, BMI1, PCGF5 or PCGF6), one PHC protein (PHC1, PHC2 or PHC3) and one of the CBX proteins (CBX2, CBX4, CBX6, CBX7 or CBX8). Part of a complex that contains RNF2, UB2D3 and BMI1; within that complex RNF2 and BMI1 form a tight heterodimer, where UB2D3 interacts only with RNF2. The complex composed of RNF2, UB2D3 and BMI1 binds nucleosomes, and has activity only with nucleosomal histone H2A. Part of a complex that contains PCGF5, RNF2 and UBE2D3. Part of a complex that contains AUTS2, PCGF5, RNF2, CSNK2B and RYBP. Interacts with CBX6 and CBX8. Interacts with PHC1, PCGF2, RYBP, CBX7, CBX4, CBX2, RNF1/RING1, BMI1 and PHC2. Interaction with RYBP and CBX7 is mutually exclusive; both compete for the same binding site on RNF2. Component of repressive BCOR complex containing a Polycomb group subcomplex at least composed of RYBP, PCGF1, BCOR and RING1. Interacts with CBX2 and PHC1. Interacts with CHTOP. Interacts with AURKB. Part of the E2F6.com-1 complex in G0 phase composed of E2F6, MGA, MAX, TFDP1, CBX3, BAT8, EUHMTASE1, RNF1/RING1, RNF2/RING2, MBLR, L3MBTL2 and YAF2. Component of some MLL1/MLL complex, at least composed of the core components KMT2A/MLL1, ASH2L, HCFC1/HCF1, WDR5 and RBBP5, as well as the facultative components BACC1, CHD8, E2F6, HSP70, INO80C, KANSL1, LAS1L, MAX, MCRS1, MGA, MYST1/MOF, PELP1, PHF20, PRP31, RING2, RUVB1/TIP49A, RUVB2/TIP49B, SENP3, TAF1, TAF4, TAF6, TAF7, TAF9 and TEX10. Interacts with RYBP, HIP2 and TFCP2. Interacts with NUPR1. Interacts with SAMD7 in a PHC2-dependent manner. Monoubiquitinated, by auto-ubiquitination. Polyubiquitinated in the presence of UBE2D3 (in vitro).

It is found in the nucleus. The protein localises to the cytoplasm. Its subcellular location is the chromosome. The enzyme catalyses S-ubiquitinyl-[E2 ubiquitin-conjugating enzyme]-L-cysteine + [acceptor protein]-L-lysine = [E2 ubiquitin-conjugating enzyme]-L-cysteine + N(6)-ubiquitinyl-[acceptor protein]-L-lysine.. It participates in protein modification; protein ubiquitination. Its function is as follows. E3 ubiquitin-protein ligase that mediates monoubiquitination of 'Lys-119' of histone H2A (H2AK119Ub), thereby playing a central role in histone code and gene regulation. H2AK119Ub gives a specific tag for epigenetic transcriptional repression and participates in X chromosome inactivation of female mammals. May be involved in the initiation of both imprinted and random X inactivation. Essential component of a Polycomb group (PcG) multiprotein PRC1-like complex, a complex class required to maintain the transcriptionally repressive state of many genes, including Hox genes, throughout development. PcG PRC1 complex acts via chromatin remodeling and modification of histones, rendering chromatin heritably changed in its expressibility. E3 ubiquitin-protein ligase activity is enhanced by BMI1/PCGF4. Acts as the main E3 ubiquitin ligase on histone H2A of the PRC1 complex, while RING1 may rather act as a modulator of RNF2/RING2 activity. Plays a role in the transcriptional repression of genes that are required for pluripotency in embryonic stem cells, thereby contributing to differentiation of the ectodermal and endodermal germ layers. Association with the chromosomal DNA is cell-cycle dependent. In resting B- and T-lymphocytes, interaction with AURKB leads to block its activity, thereby maintaining transcription in resting lymphocytes. Also acts as a negative regulator of autophagy by mediating ubiquitination of AMBRA1, leading to its subsequent degradation. The sequence is that of E3 ubiquitin-protein ligase RING2 (Rnf2) from Rattus norvegicus (Rat).